Consider the following 293-residue polypeptide: Pyridoxal 5'-phosphate synthase subunit PdxS (293 aa).

D23 provides a ligand contact to D-ribose 5-phosphate. K80 acts as the Schiff-base intermediate with D-ribose 5-phosphate in catalysis. G152 serves as a coordination point for D-ribose 5-phosphate. D-glyceraldehyde 3-phosphate is bound at residue R164. D-ribose 5-phosphate contacts are provided by residues G213 and 234 to 235 (GS).

It belongs to the PdxS/SNZ family. In terms of assembly, in the presence of PdxT, forms a dodecamer of heterodimers.

The enzyme catalyses aldehydo-D-ribose 5-phosphate + D-glyceraldehyde 3-phosphate + L-glutamine = pyridoxal 5'-phosphate + L-glutamate + phosphate + 3 H2O + H(+). Its pathway is cofactor biosynthesis; pyridoxal 5'-phosphate biosynthesis. Functionally, catalyzes the formation of pyridoxal 5'-phosphate from ribose 5-phosphate (RBP), glyceraldehyde 3-phosphate (G3P) and ammonia. The ammonia is provided by the PdxT subunit. Can also use ribulose 5-phosphate and dihydroxyacetone phosphate as substrates, resulting from enzyme-catalyzed isomerization of RBP and G3P, respectively. This Herpetosiphon aurantiacus (strain ATCC 23779 / DSM 785 / 114-95) protein is Pyridoxal 5'-phosphate synthase subunit PdxS.